We begin with the raw amino-acid sequence, 729 residues long: Heterogeneous nuclear ribonucleoprotein M (729 aa).

The span at 1–13 (MAAGVEAAAEVAA) shows a compositional bias: low complexity. Positions 1–65 (MAAGVEAAAE…GGNRFEPYSN (65 aa)) are disordered. Position 2 is an N-acetylalanine (A2). A Glycyl lysine isopeptide (Lys-Gly) (interchain with G-Cter in SUMO2) cross-link involves residue K17. A Phosphoserine modification is found at S29. Glycyl lysine isopeptide (Lys-Gly) (interchain with G-Cter in SUMO2) cross-links involve residues K37, K68, and K82. A compositionally biased stretch (basic and acidic residues) spans 37-49 (KGEERPTQNEKRK). RRM domains lie at 70–148 (YRAF…EDPD) and 203–280 (STVF…MDER). S85 carries the post-translational modification Phosphoserine. Residues K87 and K126 each participate in a glycyl lysine isopeptide (Lys-Gly) (interchain with G-Cter in SUMO2) cross-link. K133 bears the N6-acetyllysine; alternate mark. K133 is covalently cross-linked (Glycyl lysine isopeptide (Lys-Gly) (interchain with G-Cter in SUMO2); alternate). Glycyl lysine isopeptide (Lys-Gly) (interchain with G-Cter in SUMO2) cross-links involve residues K142 and K144. S203 carries the post-translational modification Phosphoserine. K220 participates in a covalent cross-link: Glycyl lysine isopeptide (Lys-Gly) (interchain with G-Cter in SUMO2). At K276 the chain carries N6-acetyllysine; alternate. Residue K276 forms a Glycyl lysine isopeptide (Lys-Gly) (interchain with G-Cter in SUMO2); alternate linkage. Glycyl lysine isopeptide (Lys-Gly) (interchain with G-Cter in SUMO2) cross-links involve residues K284 and K344. 2 positions are modified to phosphoserine: S364 and S376. Glycyl lysine isopeptide (Lys-Gly) (interchain with G-Cter in SUMO2) cross-links involve residues K380 and K387. S396 bears the Phosphoserine mark. Repeat copies occupy residues 399–404 (GIERMG), 406–411 (GIDRIS), 414–419 (GMERMG), and 425–430 (GMDRVG). A 27 X 6 AA repeats of [GEVSTPAN]-[ILMV]-[DE]-[RH]-[MLVI]-[GAV] region spans residues 399–607 (GIERMGPGID…ALGAGIERMG (209 aa)). At S431 the chain carries Phosphoserine. Tandem repeats lie at residues 432–437 (EIERMG), 439–444 (VMDRMG), and 445–450 (SVERMG). Phosphoserine is present on S451. Tandem repeats lie at residues 452–457 (SIERMG), 460–465 (GLDHMA), 467–472 (SIERMG), and 474–479 (TMERIG). Residue S467 is modified to Phosphoserine. Phosphoserine is present on S480. 16 consecutive repeat copies span residues 481 to 486 (GVERMG), 492 to 497 (GLERMA), 499 to 504 (PIDRVG), 506 to 511 (TIERMG), 513 to 518 (GVERMG), 520 to 525 (AIERMG), 527 to 532 (SMDRMV), 539 to 544 (SLERMG), 546 to 551 (VMDRMA), 553 to 558 (GLERMG), 561 to 566 (NLERMG), 567 to 571 (LERMG), 574 to 579 (SLERMG), 580 to 584 (LERMG), 587 to 592 (SLERMG), and 602 to 607 (GIERMG). Omega-N-methylarginine is present on R495. S527 carries the post-translational modification Phosphoserine. Phosphoserine is present on S574. S587 carries the post-translational modification Phosphoserine. Phosphoserine occurs at positions 617, 632, and 636. K650 is covalently cross-linked (Glycyl lysine isopeptide (Lys-Gly) (interchain with G-Cter in SUMO2)). The RRM 3 domain maps to 652–728 (CQIFVRNLPF…REIDVRIDRN (77 aa)). T664 carries the phosphothreonine modification. K666 participates in a covalent cross-link: Glycyl lysine isopeptide (Lys-Gly) (interchain with G-Cter in SUMO2). K671 carries the post-translational modification N6-acetyllysine. Glycyl lysine isopeptide (Lys-Gly) (interchain with G-Cter in SUMO2) cross-links involve residues K684 and K691. N6-acetyllysine; alternate is present on K697. Residue K697 forms a Glycyl lysine isopeptide (Lys-Gly) (interchain with G-Cter in SUMO2); alternate linkage. K697 is covalently cross-linked (Glycyl lysine isopeptide (Lys-Gly) (interchain with G-Cter in SUMO1); alternate). S700 carries the post-translational modification Phosphoserine. K715 is covalently cross-linked (Glycyl lysine isopeptide (Lys-Gly) (interchain with G-Cter in SUMO2)).

Identified in the spliceosome C complex. Interacts with PPIA/CYPA. In terms of processing, sumoylated.

It localises to the nucleus. Functionally, pre-mRNA binding protein in vivo, binds avidly to poly(G) and poly(U) RNA homopolymers in vitro. Involved in splicing. Acts as a receptor for carcinoembryonic antigen in Kupffer cells, may initiate a series of signaling events leading to tyrosine phosphorylation of proteins and induction of IL-1 alpha, IL-6, IL-10 and tumor necrosis factor alpha cytokines. This chain is Heterogeneous nuclear ribonucleoprotein M (Hnrnpm), found in Mus musculus (Mouse).